The primary structure comprises 342 residues: Oxygen-dependent coproporphyrinogen-III oxidase (342 aa).

A substrate-binding site is contributed by Ser98. Residues His102 and His112 each contribute to the a divalent metal cation site. His112 acts as the Proton donor in catalysis. A substrate-binding site is contributed by 114 to 116 (NYR). A divalent metal cation-binding residues include His146 and His176. Residues 266 to 301 (YVEFNLVWDRGTIFGLQTNGRTESILMSLPPLARWE) are important for dimerization.

The protein belongs to the aerobic coproporphyrinogen-III oxidase family. In terms of assembly, homodimer. The cofactor is a divalent metal cation.

The protein resides in the cytoplasm. The catalysed reaction is coproporphyrinogen III + O2 + 2 H(+) = protoporphyrinogen IX + 2 CO2 + 2 H2O. It participates in porphyrin-containing compound metabolism; protoporphyrin-IX biosynthesis; protoporphyrinogen-IX from coproporphyrinogen-III (O2 route): step 1/1. Involved in the heme and chlorophyll biosynthesis. Catalyzes the aerobic oxidative decarboxylation of propionate groups of rings A and B of coproporphyrinogen-III to yield the vinyl groups in protoporphyrinogen-IX. This is Oxygen-dependent coproporphyrinogen-III oxidase from Prochlorococcus marinus (strain MIT 9312).